The following is a 104-amino-acid chain: ATP-dependent Clp protease adapter protein ClpS (104 aa).

The protein belongs to the ClpS family. As to quaternary structure, binds to the N-terminal domain of the chaperone ClpA.

Its function is as follows. Involved in the modulation of the specificity of the ClpAP-mediated ATP-dependent protein degradation. This chain is ATP-dependent Clp protease adapter protein ClpS, found in Bordetella bronchiseptica (strain ATCC BAA-588 / NCTC 13252 / RB50) (Alcaligenes bronchisepticus).